We begin with the raw amino-acid sequence, 329 residues long: DNA-directed RNA polymerase subunit alpha (329 aa).

The segment at 1 to 234 (MQGSVTEFLK…EQLDAFVELR (234 aa)) is alpha N-terminal domain (alpha-NTD). The alpha C-terminal domain (alpha-CTD) stretch occupies residues 248–329 (FDPILLRPVD…WPPASLADDL (82 aa)).

Belongs to the RNA polymerase alpha chain family. In terms of assembly, homodimer. The RNAP catalytic core consists of 2 alpha, 1 beta, 1 beta' and 1 omega subunit. When a sigma factor is associated with the core the holoenzyme is formed, which can initiate transcription.

It catalyses the reaction RNA(n) + a ribonucleoside 5'-triphosphate = RNA(n+1) + diphosphate. In terms of biological role, DNA-dependent RNA polymerase catalyzes the transcription of DNA into RNA using the four ribonucleoside triphosphates as substrates. This is DNA-directed RNA polymerase subunit alpha from Shewanella loihica (strain ATCC BAA-1088 / PV-4).